Reading from the N-terminus, the 315-residue chain is MASLNKLSSNDIGNIDRQIAKLKQGQILTESEIKSLCIKAKEILSDEPNIIQVRAPLTICGDIHGQFHDLIELFQIGGNLPDTNYLFLGDYVDRGSQSVETFSLMLSLKVRYKDRIVLLRGNHENREINKVYGFYDECFRKYGNEIVWKQFTEVFGYLPLSAIVEQQIFCAHGGLSPAMESVDQIKQLNRVQDIPHEGLMCDLLWSDPEETKNGWGISPRGAGWTWGCDITEKFLHSNKLKQIARAHQLVMEGIQKVHNQKTITIFSAPNYCYRCGNQACIVEVDEQLRMNQTQFEPAPRENEPHTTRRVPDYFL.

Residues aspartate 62, histidine 64, aspartate 90, and asparagine 122 each contribute to the Mn(2+) site. Catalysis depends on histidine 123, which acts as the Proton donor. Residues histidine 172 and histidine 247 each contribute to the Mn(2+) site. The disordered stretch occupies residues 294-315; the sequence is QFEPAPRENEPHTTRRVPDYFL. Residues 298–315 are compositionally biased toward basic and acidic residues; that stretch reads APRENEPHTTRRVPDYFL. Leucine methyl ester is present on leucine 315.

It belongs to the PPP phosphatase family. PP-2A subfamily. Requires Mn(2+) as cofactor. Post-translationally, reversibly methyl esterified on Leu-315 by leucine carboxyl methyltransferase 1 (PPM1) and protein phosphatase methylesterase 1 (PPE1). Carboxyl methylation influences the affinity of the catalytic subunit for the different regulatory subunits, thereby modulating the PP2A holoenzyme's substrate specificity, enzyme activity and cellular localization.

It catalyses the reaction O-phospho-L-seryl-[protein] + H2O = L-seryl-[protein] + phosphate. It carries out the reaction O-phospho-L-threonyl-[protein] + H2O = L-threonyl-[protein] + phosphate. The chain is Serine/threonine-protein phosphatase PP2A catalytic subunit 3 (Ppn3) from Paramecium tetraurelia.